The chain runs to 48 residues: Small polypeptide DEVIL 19 (48 aa).

Residues 13–44 are required for DVL/RTFL small polypeptide activity; sequence AFTSKCVSLVKEQRARLYILRRCATMLCCWYI. Residues 25–42 form a helical membrane-spanning segment; sequence QRARLYILRRCATMLCCW.

Belongs to the DVL/RTFL small polypeptides family.

The protein resides in the cell membrane. Small polypeptide acting as a regulatory molecule which coordinates cellular responses required for differentiation, growth and development, probably by restricting polar cell proliferation in lateral organs and coordinating socket cell recruitment and differentiation at trichome sites. The chain is Small polypeptide DEVIL 19 from Arabidopsis thaliana (Mouse-ear cress).